The primary structure comprises 183 residues: Small ribosomal subunit protein uS4 (183 aa).

The region spanning arginine 106–histidine 168 is the S4 RNA-binding domain. Residues asparagine 158–glutamate 183 are disordered. Basic and acidic residues predominate over residues aspartate 165–glutamate 183.

It belongs to the universal ribosomal protein uS4 family. As to quaternary structure, part of the 30S ribosomal subunit. Contacts protein S5. The interaction surface between S4 and S5 is involved in control of translational fidelity.

One of the primary rRNA binding proteins, it binds directly to 16S rRNA where it nucleates assembly of the body of the 30S subunit. Its function is as follows. With S5 and S12 plays an important role in translational accuracy. This Picrophilus torridus (strain ATCC 700027 / DSM 9790 / JCM 10055 / NBRC 100828 / KAW 2/3) protein is Small ribosomal subunit protein uS4.